The chain runs to 51 residues: Large ribosomal subunit protein eL39 (51 aa).

It belongs to the eukaryotic ribosomal protein eL39 family. As to quaternary structure, interacts with impact.

In Ictalurus punctatus (Channel catfish), this protein is Large ribosomal subunit protein eL39 (rpl39).